We begin with the raw amino-acid sequence, 178 residues long: Small ribosomal subunit protein uS4 (178 aa).

The 63-residue stretch at 104–166 (RRLQTIVYRK…PNSPMASENH (63 aa)) folds into the S4 RNA-binding domain. Residues 158-178 (NSPMASENHPERTAAVSEENQ) are disordered.

This sequence belongs to the universal ribosomal protein uS4 family. Part of the 30S ribosomal subunit. Contacts protein S5. The interaction surface between S4 and S5 is involved in control of translational fidelity.

In terms of biological role, one of the primary rRNA binding proteins, it binds directly to 16S rRNA where it nucleates assembly of the body of the 30S subunit. Functionally, with S5 and S12 plays an important role in translational accuracy. The sequence is that of Small ribosomal subunit protein uS4 from Methanococcus maripaludis (strain C5 / ATCC BAA-1333).